The following is a 404-amino-acid chain: Propionate kinase (404 aa).

This sequence belongs to the acetokinase family. PduW subfamily.

It is found in the cytoplasm. It catalyses the reaction propanoate + ATP = propanoyl phosphate + ADP. It functions in the pathway polyol metabolism; 1,2-propanediol degradation. Functionally, works with phosphate acetyltransferase (pta) to capture exogenous propionate and regenerate propionyl-CoA during degradation of 1,2-propanediol (1,2-PD). The sequence is that of Propionate kinase from Klebsiella pneumoniae subsp. pneumoniae (strain ATCC 700721 / MGH 78578).